We begin with the raw amino-acid sequence, 3419 residues long: MKNPKEEIRRIRIVNMLKRGVARVNPLGGLKRLPAGLLLGHGPIRMVLAILAFLRFTAIKPSLGLINRWGSVGKKEAMEIIKKFKKDLAAMLRIINARKERKRRGADTSIGIIGLLLTTAMAAEITRRGSAYYMYLDRSDAGKAISFATTLGVNKCHVQIMDLGHMCDATMSYECPMLDEGVEPDDVDCWCNTTSTWVVYGTCHHKKGEARRSRRAVTLPSHSTRKLQTRSQTWLESREYTKHLIKVENWIFRNPGFALVAVAIAWLLGSSTSQKVIYLVMILLIAPAYSIRCIGVSNRDFVEGMSGGTWVDVVLEHGGCVTVMAQDKPTVDIELVTTTVSNMAEVRSYCYEASISDMASDSRCPTQGEAYLDKQSDTQYVCKRTLVDRGWGNGCGLFGKGSLVTCAKFTCSKKMTGKSIQPENLEYRIMLSVHGSQHSGMIGYETDEDRAKVEVTPNSPRAEATLGGFGSLGLDCEPRTGLDFSDLYYLTMNNKHWLVHKEWFHDIPLPWHAGADTGTPHWNNKEALVEFKDAHAKRQTVVVLGSQEGAVHTALAGALEAEMDGAKGRLFSGHLKCRLKMDKLRLKGVSYSLCTAAFTFTKVPAETLHGTVTVEVQYAGTDGPCKIPVQMAVDMQTLTPVGRLITANPVITESTENSKMMLELDPPFGDSYIVIGVGDKKITHHWHRSGSTIGKAFEATVRGAKRMAVLGDTAWDFGSVGGVFNSLGKGIHQIFGAAFKSLFGGMSWFSQILIGTLLVWLGLNTKNGSISLTCLALGGVMIFLSTAVSADVGCSVDFSKKETRCGTGVFIYNDVEAWRDRYKYHPDSPRRLAAAVKQAWEEGICGISSVSRMENIMWKSVEGELNAILEENGVQLTVVVGSVKNPMWRGPQRLPVPVNELPHGWKAWGKSYFVRAAKTNNSFVVDGDTLKECPLEHRAWNSFLVEDHGFGVFHTSVWLKVREDYSLECDPAVIGTAVKGREAAHSDLGYWIESEKNDTWRLKRAHLIEMKTCEWPKSHTLWTDGVEESDLIIPKSLAGPLSHHNTREGYRTQVKGPWHSEELEIRFEECPGTKVYVEETCGTRGPSLRSTTASGRVIEEWCCRECTMPPLSFRAKDGCWYGMEIRPRKEPESNLVRSMVTAGSTDHMDHFSLGVLVILLMVQEGLKKRMTTKIIMSTSMAVLVVMILGGFSMSDLAKLVILMGATFAEMNTGGDVAHLALVAAFKVRPALLVSFIFRANWTPRESMLLALASCLLQTAISALEGDLMVLINGFALAWLAIRAMAVPRTDNIALPILAALTPLARGTLLVAWRAGLATCGGIMLLSLKGKGSVKKNLPFVMALGLTAVRVVDPINVVGLLLLTRSGKRSWPPSEVLTAVGLICALAGGFAKADIEMAGPMAAVGLLIVSYVVSGKSVDMYIERAGDITWEKDAEVTGNSPRLDVALDESGDFSLVEEDGPPMREIILKVVLMAICGMNPIAIPFAAGAWYVYVKTGKRSGALWDVPAPKEVKKGETTDGVYRVMTRRLLGSTQVGVGVMQEGVFHTMWHVTKGAALRSGEGRLDPYWGDVKQDLVSYCGPWKLDAAWDGLSEVQLLAVPPGERARNIQTLPGIFKTKDGDIGAVALDYPAGTSGSPILDKCGRVIGLYGNGVVIKNGSYVSAITQGKREEETPVECFEPSMLKKKQLTVLDLHPGAGKTRRVLPEIVREAIKKRLRTVILAPTRVVAAEMEEALRGLPVRYMTTAVNVTHSGTEIVDLMCHATFTSRLLQPIRVPNYNLNIMDEAHFTDPSSIAARGYISTRVEMGEAAAIFMTATPPGTRDAFPDSNSPIMDTEVEVPERAWSSGFDWVTDHSGKTVWFVPSVRNGNEIAACLTKAGKRVIQLSRKTFETEFQKTKNQEWDFVITTDISEMGANFKADRVIDSRRCLKPVILDGERVILAGPMPVTHASAAQRRGRIGRNPNKPGDEYMYGGGCAETDEGHAHWLEARMLLDNIYLQDGLIASLYRPEADKVAAIEGEFKLRTEQRKTFVELMKRGDLPVWLAYQVASAGITYTDRRWCFDGTTNNTIMEDSVPAEVWTKYGEKRVLKPRWMDARVCSDHAALKSFKEFAAGKRGAALGVMEALGTLPGHMTERFQEAIDNLAVLMRAETGSRPYKAAAAQLPETLETIMLLGLLGTVSLGIFFVLMRNKGIGKMGFGMVTLGASAWLMWLSEIEPARIACVLIVVFLLLVVLIPEPEKQRSPQDNQMAIIIMVAVGLLGLITANELGWLERTKNDIAHLMGRREEGATMGFSMDIDLRPASAWAIYAALTTLITPAVQHAVTTSYNNYSLMAMATQAGVLFGMGKGMPFMHGDLGVPLLMMGCYSQLTPLTLIVAIILLVAHYMYLIPGLQAAAARAAQKRTAAGIMKNPVVDGIVVTDIDTMTIDPQVEKKMGQVLLIAVAISSAVLLRTAWGWGEAGALITAATSTLWEGSPNKYWNSSTATSLCNIFRGSYLAGASLIYTVTRNAGLVKRRGGGTGETLGEKWKARLNQMSALEFYSYKKSGITEVCREEARRALKDGVATGGHAVSRGSAKIRWLEERGYLQPYGKVVDLGCGRGGWSYYAATIRKVQEVRGYTKGGPGHEEPMLVQSYGWNIVRLKSGVDVFHMAAEPCDTLLCDIGESSSSPEVEETRTLRVLSMVGDWLEKRPGAFCIKVLCPYTSTMMETMERLQRRHGGGLVRVPLCRNSTHEMYWVSGAKSNIIKSVSTTSQLLLGRMDGPRRPVKYEEDVNLGSGTRAVASCAEAPNMKIIGRRIERIRNEHAETWFLDENHPYRTWAYHGSYEAPTQGSASSLVNGVVRLLSKPWDVVTGVTGIAMTDTTPYGQQRVFKEKVDTRVPDPQEGTRQVMNIVSSWLWKELGKRKRPRVCTKEEFINKVRSNAALGAIFEEEKEWKTAVEAVNDPRFWALVDREREHHLRGECHSCVYNMMGKREKKQGEFGKAKGSRAIWYMWLGARFLEFEALGFLNEDHWMGRENSGGGVEGLGLQRLGYILEEMNRAPGGKMYADDTAGWDTRISKFDLENEALITNQMEEGHRTLALAVIKYTYQNKVVKVLRPAEGGKTVMDIISRQDQRGSGQVVTYALNTFTNLVVQLIRNMEAEEVLEMQDLWLLRKPEKVTRWLQSNGWDRLKRMAVSGDDCVVKPIDDRFAHALRFLNDMGKVRKDTQEWKPSTGWSNWEEVPFCSHHFNKLYLKDGRSIVVPCRHQDELIGRARVSPGAGWSIRETACLAKSYAQMWQLLYFHRRDLRLMANAICSAVPVDWVPTGRTTWSIHGKGEWMTTEDMLMVWNRVWIEENDHMEDKTPVTKWTDIPYLGKREDLWCGSLIGHRPRTTWAENIKDTVNMVRRIIGDEEKYMDYLSTQVRYLGEEGSTPGVL.

The disordered stretch occupies residues 1–25 (MKNPKEEIRRIRIVNMLKRGVARVN). At 1–104 (MKNPKEEIRR…INARKERKRR (104 aa)) the chain is on the cytoplasmic side. The segment at 37 to 72 (LLLGHGPIRMVLAILAFLRFTAIKPSLGLINRWGSV) is hydrophobic; homodimerization of capsid protein C. A propeptide spans 105-122 (GADTSIGIIGLLLTTAMA) (ER anchor for capsid protein C, removed in mature form by serine protease NS3). A helical transmembrane segment spans residues 105–125 (GADTSIGIIGLLLTTAMAAEI). The Extracellular segment spans residues 126-249 (TRRGSAYYMY…YTKHLIKVEN (124 aa)). A glycan (N-linked (GlcNAc...) asparagine; by host) is linked at Asn-192. A helical membrane pass occupies residues 250–269 (WIFRNPGFALVAVAIAWLLG). Topologically, residues 270-274 (SSTSQ) are cytoplasmic. The helical transmembrane segment at 275 to 290 (KVIYLVMILLIAPAYS) threads the bilayer. Topologically, residues 291-741 (IRCIGVSNRD…HQIFGAAFKS (451 aa)) are extracellular. Cysteines 293 and 320 form a disulfide. Lys-328 participates in a covalent cross-link: Glycyl lysine isopeptide (Lys-Gly) (interchain with G-Cter in ubiquitin). Intrachain disulfides connect Cys-350–Cys-406, Cys-350–Cys-411, Cys-364–Cys-395, Cys-382–Cys-406, Cys-382–Cys-411, Cys-476–Cys-577, and Cys-594–Cys-625. The fusion peptide stretch occupies residues 388–401 (DRGWGNGCGLFGKG). Residue Lys-567 forms a Glycyl lysine isopeptide (Lys-Gly) (interchain with G-Cter in ubiquitin) linkage. The chain crosses the membrane as a helical span at residues 742–763 (LFGGMSWFSQILIGTLLVWLGL). Over 764 to 769 (NTKNGS) the chain is Cytoplasmic. A helical transmembrane segment spans residues 770-790 (ISLTCLALGGVMIFLSTAVSA). Over 791 to 1173 (DVGCSVDFSK…EGLKKRMTTK (383 aa)) the chain is Lumenal. 6 disulfides stabilise this stretch: Cys-794/Cys-805, Cys-845/Cys-933, Cys-969/Cys-1013, Cys-1070/Cys-1119, Cys-1081/Cys-1102, and Cys-1103/Cys-1106. Asn-920 and Asn-997 each carry an N-linked (GlcNAc...) asparagine; by host glycan. A helical transmembrane segment spans residues 1174–1194 (IIMSTSMAVLVVMILGGFSMS). The Cytoplasmic segment spans residues 1195 to 1216 (DLAKLVILMGATFAEMNTGGDV). A helical membrane pass occupies residues 1217–1237 (AHLALVAAFKVRPALLVSFIF). Residues 1238–1266 (RANWTPRESMLLALASCLLQTAISALEGD) lie on the Lumenal side of the membrane. A helical transmembrane segment spans residues 1267–1287 (LMVLINGFALAWLAIRAMAVP). The Cytoplasmic portion of the chain corresponds to 1288 to 1291 (RTDN). Residues 1292–1312 (IALPILAALTPLARGTLLVAW) traverse the membrane as a helical segment. Topologically, residues 1313 to 1341 (RAGLATCGGIMLLSLKGKGSVKKNLPFVM) are lumenal. Residues 1342 to 1362 (ALGLTAVRVVDPINVVGLLLL) traverse the membrane as a helical segment. At 1363 to 1369 (TRSGKRS) the chain is on the cytoplasmic side. A helical membrane pass occupies residues 1370 to 1390 (WPPSEVLTAVGLICALAGGFA). Topologically, residues 1391-1393 (KAD) are lumenal. The chain crosses the membrane as a helical span at residues 1394–1414 (IEMAGPMAAVGLLIVSYVVSG). Residues 1415-1468 (KSVDMYIERAGDITWEKDAEVTGNSPRLDVALDESGDFSLVEEDGPPMREIILK) lie on the Cytoplasmic side of the membrane. Positions 1421–1460 (IERAGDITWEKDAEVTGNSPRLDVALDESGDFSLVEEDGP) are interacts with and activates NS3 protease. A disordered region spans residues 1425 to 1447 (GDITWEKDAEVTGNSPRLDVALD). The segment at residues 1469–1489 (VVLMAICGMNPIAIPFAAGAW) is an intramembrane region (helical). Over 1490-2166 (YVYVKTGKRS…KAAAAQLPET (677 aa)) the chain is Lumenal. The 178-residue stretch at 1499–1676 (SGALWDVPAP…KREEETPVEC (178 aa)) folds into the Peptidase S7 domain. Catalysis depends on charge relay system; for serine protease NS3 activity residues His-1549, Asp-1573, and Ser-1633. Positions 1679 to 1835 (PSMLKKKQLT…DSNSPIMDTE (157 aa)) constitute a Helicase ATP-binding domain. Residues 1683–1686 (KKKQ) form an important for RNA-binding region. Residue 1692-1699 (LHPGAGKT) coordinates ATP. Residues 1783–1786 (DEAH) carry the DEAH box motif. The region spanning 1830-2009 (PIMDTEVEVP…GLIASLYRPE (180 aa)) is the Helicase C-terminal domain. Lys-1887 is subject to N6-acetyllysine; by host. Residues 2167–2187 (LETIMLLGLLGTVSLGIFFVL) form a helical membrane-spanning segment. Over 2188-2191 (MRNK) the chain is Lumenal. Residues 2192–2212 (GIGKMGFGMVTLGASAWLMWL) constitute an intramembrane region (helical). Over 2213–2214 (SE) the chain is Cytoplasmic. Residues 2215 to 2235 (IEPARIACVLIVVFLLLVVLI) form a helical membrane-spanning segment. Residues 2236 to 2250 (PEPEKQRSPQDNQMA) lie on the Lumenal side of the membrane. The segment at residues 2251–2265 (IIIMVAVGLLGLITA) is an intramembrane region (helical). Topologically, residues 2266-2303 (NELGWLERTKNDIAHLMGRREEGATMGFSMDIDLRPAS) are lumenal. An intramembrane region (helical) is located at residues 2304–2324 (AWAIYAALTTLITPAVQHAVT). The Lumenal portion of the chain corresponds to 2325 to 2340 (TSYNNYSLMAMATQAG). The chain crosses the membrane as a helical span at residues 2341–2361 (VLFGMGKGMPFMHGDLGVPLL). At 2362–2371 (MMGCYSQLTP) the chain is on the cytoplasmic side. A helical membrane pass occupies residues 2372–2392 (LTLIVAIILLVAHYMYLIPGL). Residues 2393 to 2437 (QAAAARAAQKRTAAGIMKNPVVDGIVVTDIDTMTIDPQVEKKMGQ) lie on the Lumenal side of the membrane. A helical membrane pass occupies residues 2438–2458 (VLLIAVAISSAVLLRTAWGWG). Topologically, residues 2459 to 3419 (EAGALITAAT…GEEGSTPGVL (961 aa)) are cytoplasmic. The mRNA cap 0-1 NS5-type MT domain maps to 2517–2781 (GGGTGETLGE…DVNLGSGTRA (265 aa)). MRNA contacts are provided by Lys-2529, Leu-2532, Asn-2533, Met-2535, Phe-2540, and Lys-2544. Residue 2529–2535 (KARLNQM) participates in GTP binding. Ser-2572 lines the S-adenosyl-L-methionine pocket. Residue Ser-2572 is modified to Phosphoserine. Lys-2577 (for 2'-O-MTase activity) is an active-site residue. The tract at residues 2593–2596 (VVDL) is SUMO-interacting motif (SIM). Gly-2602, Trp-2603, Thr-2620, Lys-2621, His-2626, Glu-2627, Asp-2647, Val-2648, Asp-2662, and Ile-2663 together coordinate S-adenosyl-L-methionine. The active-site For 2'-O-MTase activity is Asp-2662. 2665–2671 (ESSSSPE) is a binding site for GTP. Ser-2666 is a binding site for mRNA. Catalysis depends on Lys-2698, which acts as the For 2'-O-MTase activity. MRNA contacts are provided by Arg-2729 and Ser-2731. 2729–2731 (RNS) provides a ligand contact to GTP. Glu-2734 (for 2'-O-MTase activity) is an active-site residue. Tyr-2736 contributes to the S-adenosyl-L-methionine binding site. The Nuclear localization signal (NLS) motif lies at 2904-2910 (KRKRPRV). Residues Glu-2955, His-2959, Cys-2964, and Cys-2967 each contribute to the Zn(2+) site. The 151-residue stretch at 3045 to 3195 (GKMYADDTAG…KPIDDRFAHA (151 aa)) folds into the RdRp catalytic domain. Residues His-3230, Cys-3246, and Cys-3365 each coordinate Zn(2+).

It in the N-terminal section; belongs to the class I-like SAM-binding methyltransferase superfamily. mRNA cap 0-1 NS5-type methyltransferase family. In terms of assembly, homodimer. Interacts with host SERTAD3; this interaction promotes capsid protein C degradation. Interacts with host CAPRIN1; this interaction is probably linked to the inhibition of stress granules formation by the virus. Interacts with host G3BP1; this interaction is probably linked to the inhibition of stress granules formation by the virus. As to quaternary structure, forms heterodimers with envelope protein E in the endoplasmic reticulum and Golgi. Interacts with non-structural protein 2A. Homodimer; in the endoplasmic reticulum and Golgi. Interacts with host TYRO3, AXL and DC-SIGN proteins. Interacts with non-structural protein 2A. Interacts with host HAVCR1; this interaction likely mediates virus attachment to host cell. Interacts with host NCAM1. Interacts with host HSPA5. Interacts with Aedes aegypti SRPN25, APY and venom allergen-1 salivary proteins; the interactions do not affect Zika virus replication in human endothelial cells and keratinocytes. In terms of assembly, homodimer; Homohexamer when secreted. Interacts with host TBK1. Interacts with host USP8. Interacts with envelope protein E. Interacts with host HSPA5. As to quaternary structure, interacts with the structural protein prM/E complex, and the NS2B/NS3 protease complex. Forms a heterodimer with serine protease NS3. May form homooligomers. Interacts with human SPCS1. Interacts with non-structural protein 2A. In terms of assembly, forms a heterodimer with NS2B. Interacts with NS4B. Interacts with unphosphorylated RNA-directed RNA polymerase NS5; this interaction stimulates RNA-directed RNA polymerase NS5 guanylyltransferase activity. Interacts with non-structural protein 2A. Interacts with host SHFL; this interaction promotes NS3 degradation via a lysosome-dependent pathway. Interacts with host CEP63; this interaction disorganizes the centrosome and inhibits host innate immune response. As to quaternary structure, may interact with host ANKLE2; the interaction may cause defects in brain development, such as microcephaly. May interact with host SRPRA and SEC61G. Interacts with serine protease NS3. Interacts with NS1. Interacts with host TBK1. In terms of assembly, homodimer. Interacts with host STAT2; this interaction inhibits the phosphorylation of the latter, and, when all viral proteins are present (polyprotein), targets STAT2 for degradation. Interacts with host TBK1 and IKBKE; these interactions lead to the inhibition of the host RIG-I signaling pathway. Interacts with host KPNA2. Interacts with host PAF1 complex; the interaction may prevent the recruitment of the host PAF1 complex to interferon-responsive genes, and thus reduces the immune response. Interacts with serine protease NS3. Interacts with host ZSWIM8; this interaction allows STAT2 binding to ZSWIM8 and subsequent proteasomal degradation leading to inhibition of interferon signaling. Post-translationally, specific enzymatic cleavages in vivo yield mature proteins. Cleavages in the lumen of endoplasmic reticulum are performed by host signal peptidase, whereas cleavages in the cytoplasmic side are performed by serine protease NS3. Signal cleavage at the 2K-4B site requires a prior NS3 protease-mediated cleavage at the 4A-2K site. Cleaved in post-Golgi vesicles by a host furin, releasing the mature small envelope protein M, and peptide pr. This cleavage is incomplete as up to 30% of viral particles still carry uncleaved prM. In terms of processing, N-glycosylation plays a role in virulence in mammalian and mosquito hosts, but may have no effect on neurovirulence. Post-translationally, ubiquitination by host TRIM7 promotes virus attachment and fusion of the virus and the host endosome membrane. N-glycosylated. The excreted form is glycosylated, which is required for efficient secretion of the protein from infected cells. In terms of processing, acetylated by host KAT5. Acetylation modulates NS3 RNA-binding and unwinding activities and plays an important positive role for viral replication. Post-translationally, phosphorylated on serines residues. This phosphorylation may trigger NS5 nuclear localization. Sumoylated, required for regulating IFN induced interferon stimulated genes/ISGs.

Its subcellular location is the virion. It localises to the host nucleus. The protein localises to the host cytoplasm. The protein resides in the host perinuclear region. It is found in the secreted. Its subcellular location is the virion membrane. It localises to the host endoplasmic reticulum membrane. The catalysed reaction is Selective hydrolysis of -Xaa-Xaa-|-Yaa- bonds in which each of the Xaa can be either Arg or Lys and Yaa can be either Ser or Ala.. The enzyme catalyses RNA(n) + a ribonucleoside 5'-triphosphate = RNA(n+1) + diphosphate. It carries out the reaction a ribonucleoside 5'-triphosphate + H2O = a ribonucleoside 5'-diphosphate + phosphate + H(+). It catalyses the reaction ATP + H2O = ADP + phosphate + H(+). The catalysed reaction is a 5'-end (5'-triphosphoguanosine)-ribonucleoside in mRNA + S-adenosyl-L-methionine = a 5'-end (N(7)-methyl 5'-triphosphoguanosine)-ribonucleoside in mRNA + S-adenosyl-L-homocysteine. The enzyme catalyses a 5'-end (N(7)-methyl 5'-triphosphoguanosine)-ribonucleoside in mRNA + S-adenosyl-L-methionine = a 5'-end (N(7)-methyl 5'-triphosphoguanosine)-(2'-O-methyl-ribonucleoside) in mRNA + S-adenosyl-L-homocysteine + H(+). Plays a role in virus budding by binding to the host cell membrane and packages the viral RNA into a nucleocapsid that forms the core of the mature virus particle. During virus entry, may induce genome penetration into the host cytoplasm after hemifusion induced by the surface proteins. Can migrate to the cell nucleus where it modulates host functions. Inhibits the integrated stress response (ISR) in the infected cell. Functionally, inhibits RNA silencing by interfering with host Dicer. Its function is as follows. Prevents premature fusion activity of envelope proteins in trans-Golgi by binding to envelope protein E at pH 6.0. After virion release in extracellular space, gets dissociated from E dimers. In terms of biological role, plays a role in host immune defense modulation and protection of envelope protein E during virion synthesis. PrM-E cleavage is inefficient, many virions are only partially matured and immature prM-E proteins could play a role in immune evasion. Contributes to fetal microcephaly in humans. Acts as a chaperone for envelope protein E during intracellular virion assembly by masking and inactivating envelope protein E fusion peptide. prM is the only viral peptide matured by host furin in the trans-Golgi network probably to avoid catastrophic activation of the viral fusion activity in acidic Golgi compartment prior to virion release. May play a role in virus budding. Exerts cytotoxic effects by activating a mitochondrial apoptotic pathway through M ectodomain. May display a viroporin activity. Functionally, binds to host cell surface receptors and mediates fusion between viral and cellular membranes. Efficient virus attachment to cell is, at least in part, mediated by host HAVCR1 in a cell-type specific manner. In addition, host NCAM1 can also be used as entry receptor. Interaction with host HSPA5 plays an important role in the early stages of infection as well. Envelope protein is synthesized in the endoplasmic reticulum and forms a heterodimer with protein prM. The heterodimer plays a role in virion budding in the ER, and the newly formed immature particle is covered with 60 spikes composed of heterodimers between precursor prM and envelope protein E. The virion is transported to the Golgi apparatus where the low pH causes the dissociation of PrM-E heterodimers and formation of E homodimers. PrM-E cleavage is inefficient, many virions are only partially matured and immature prM-E proteins could play a role in immune evasion. Its function is as follows. Plays a role in the inhibition of host RLR-induced interferon-beta activation by targeting TANK-binding kinase 1/TBK1. In addition, recruits the host deubiquitinase USP8 to cleave 'Lys-11'-linked polyubiquitin chains from caspase-1/CASP1 thus inhibiting its proteasomal degradation. In turn, stabilized CASP1 promotes cleavage of cGAS, which inhibits its ability to recognize mitochondrial DNA release and initiate type I interferon signaling. In terms of biological role, component of the viral RNA replication complex that recruits genomic RNA, the structural protein prM/E complex, and the NS2B/NS3 protease complex to the virion assembly site and orchestrates virus morphogenesis. Antagonizes also the host MDA5-mediated induction of alpha/beta interferon antiviral response. May disrupt adherens junction formation and thereby impair proliferation of radial cells in the host cortex. Required cofactor for the serine protease function of NS3. Functionally, displays three enzymatic activities: serine protease, NTPase and RNA helicase. NS3 serine protease, in association with NS2B, performs its autocleavage and cleaves the polyprotein at dibasic sites in the cytoplasm: C-prM, NS2A-NS2B, NS2B-NS3, NS3-NS4A, NS4A-2K and NS4B-NS5. NS3 RNA helicase binds RNA and unwinds dsRNA in the 3' to 5' direction. Leads to translation arrest when expressed ex vivo. Disrupts host centrosome organization in a CEP63-dependent manner to degrade host TBK1 and inhibits innate immune response. Inhibits the integrated stress response (ISR) in the infected cell. Its function is as follows. Regulates the ATPase activity of the NS3 helicase activity. NS4A allows NS3 helicase to conserve energy during unwinding. Cooperatively with NS4B suppresses the Akt-mTOR pathway and leads to cellular dysregulation. By inhibiting host ANKLE2 functions, may cause defects in brain development, such as microcephaly. Also antagonizes the host MDA5-mediated induction of alpha/beta interferon antiviral response. Inhibits the integrated stress response (ISR) in the infected cell. In terms of biological role, functions as a signal peptide for NS4B and is required for the interferon antagonism activity of the latter. Induces the formation of ER-derived membrane vesicles where the viral replication takes place. Also plays a role in the inhibition of host RLR-induced interferon-beta production at TANK-binding kinase 1/TBK1 level. Cooperatively with NS4A suppresses the Akt-mTOR pathway and leads to cellular dysregulation. Functionally, replicates the viral (+) and (-) RNA genome, and performs the capping of genomes in the cytoplasm. Methylates viral RNA cap at guanine N-7 and ribose 2'-O positions. Once sufficient NS5 is expressed, binds to the cap-proximal structure and inhibits further translation of the viral genome. Besides its role in RNA genome replication, also prevents the establishment of a cellular antiviral state by blocking the interferon-alpha/beta (IFN-alpha/beta) signaling pathway. Mechanistically, interferes with host kinases TBK1 and IKKE upstream of interferon regulatory factor 3/IRF3 to inhibit the RIG-I pathway. Also antagonizes type I interferon signaling by targeting STAT2 for degradation by the proteasome thereby preventing activation of JAK-STAT signaling pathway. Mechanistically, acts as a scaffold protein to connect host ZSWIM8/CUL3 ligase complex and STAT2, leading to STAT2 degradation. Within the host nucleus, disrupts host SUMO1 and STAT2 co-localization with PML, resulting in PML degradation. May also reduce immune responses by preventing the recruitment of the host PAF1 complex to interferon-responsive genes. In Aedes aegypti (Yellowfever mosquito), this protein is Genome polyprotein.